The chain runs to 182 residues: Ribosome-recycling factor (182 aa).

This sequence belongs to the RRF family.

It localises to the cytoplasm. Functionally, responsible for the release of ribosomes from messenger RNA at the termination of protein biosynthesis. May increase the efficiency of translation by recycling ribosomes from one round of translation to another. This chain is Ribosome-recycling factor, found in Synechococcus sp. (strain WH7803).